The sequence spans 239 residues: Purine nucleoside phosphorylase DeoD-type (239 aa).

Histidine 5 serves as a coordination point for a purine D-ribonucleoside. Phosphate is bound by residues glycine 21, arginine 25, arginine 44, and 88 to 91 (RVGS). Residues 180–182 (EME) and 204–205 (SD) contribute to the a purine D-ribonucleoside site. The active-site Proton donor is aspartate 205.

This sequence belongs to the PNP/UDP phosphorylase family. As to quaternary structure, homohexamer; trimer of homodimers.

It catalyses the reaction a purine D-ribonucleoside + phosphate = a purine nucleobase + alpha-D-ribose 1-phosphate. The catalysed reaction is a purine 2'-deoxy-D-ribonucleoside + phosphate = a purine nucleobase + 2-deoxy-alpha-D-ribose 1-phosphate. Functionally, catalyzes the reversible phosphorolytic breakdown of the N-glycosidic bond in the beta-(deoxy)ribonucleoside molecules, with the formation of the corresponding free purine bases and pentose-1-phosphate. The protein is Purine nucleoside phosphorylase DeoD-type of Klebsiella pneumoniae (strain 342).